The following is a 499-amino-acid chain: Guanosine-5'-triphosphate,3'-diphosphate pyrophosphatase (499 aa).

This sequence belongs to the GppA/Ppx family. GppA subfamily.

The catalysed reaction is guanosine 3'-diphosphate 5'-triphosphate + H2O = guanosine 3',5'-bis(diphosphate) + phosphate + H(+). It participates in purine metabolism; ppGpp biosynthesis; ppGpp from GTP: step 2/2. Catalyzes the conversion of pppGpp to ppGpp. Guanosine pentaphosphate (pppGpp) is a cytoplasmic signaling molecule which together with ppGpp controls the 'stringent response', an adaptive process that allows bacteria to respond to amino acid starvation, resulting in the coordinated regulation of numerous cellular activities. The chain is Guanosine-5'-triphosphate,3'-diphosphate pyrophosphatase from Sodalis glossinidius (strain morsitans).